A 723-amino-acid chain; its full sequence is Probable cadmium-transporting ATPase (723 aa).

Residues 12–75 enclose the HMA domain; that stretch reads EMKAYRVQGF…AGAFENLKVT (64 aa). Residues C23 and C26 each contribute to the Cd(2+) site. Helical transmembrane passes span 103–123, 127–147, 168–188, 329–349, and 361–381; these read STLLYASLLIAFGYLSSYVNG, IVTTLLFLASMFIGGLSLFKV, IGGAIIGEWAEVAIVVILFAI, YYTPIIMIIAALVAIVPPLFF, and LAVLVVGCPCALVISTPISIV. The 4-aspartylphosphate intermediate role is filled by D412. 2 consecutive transmembrane segments (helical) span residues 671–690 and 694–716; these read IIKANITFAIAIKFIALLLV and WLTLWIAILSDMGATLLVALNGL.

The protein belongs to the cation transport ATPase (P-type) (TC 3.A.3) family. Type IB subfamily.

It is found in the cell membrane. It catalyses the reaction Cd(2+)(in) + ATP + H2O = Cd(2+)(out) + ADP + phosphate + H(+). In terms of biological role, couples the hydrolysis of ATP with the export of cadmium. This is Probable cadmium-transporting ATPase (cadA) from Alkalihalophilus pseudofirmus (strain ATCC BAA-2126 / JCM 17055 / OF4) (Bacillus pseudofirmus).